We begin with the raw amino-acid sequence, 364 residues long: Aminomethyltransferase (364 aa).

This sequence belongs to the GcvT family. As to quaternary structure, the glycine cleavage system is composed of four proteins: P, T, L and H.

The catalysed reaction is N(6)-[(R)-S(8)-aminomethyldihydrolipoyl]-L-lysyl-[protein] + (6S)-5,6,7,8-tetrahydrofolate = N(6)-[(R)-dihydrolipoyl]-L-lysyl-[protein] + (6R)-5,10-methylene-5,6,7,8-tetrahydrofolate + NH4(+). The glycine cleavage system catalyzes the degradation of glycine. The protein is Aminomethyltransferase of Salmonella paratyphi B (strain ATCC BAA-1250 / SPB7).